Consider the following 143-residue polypeptide: MATVPGQLIWEIVKNNNCFLVKQFGRGNSKVQFSKETNNLTNVHSYKHSGLANKKTVTIQAADKDQAVVLATTKTKKQNKPKLSVNKSILKKEFPRMSKAVANQVVDNYYRPDLKKAALARLSAISKGLRVAKSGAKQRNRQA.

This sequence belongs to the eukaryotic ribosomal protein eL28 family. Component of the large ribosomal subunit. Expressed in seedlings, roots, stems, leaves, inflorescences and siliques.

Its subcellular location is the cytoplasm. The protein resides in the nucleus. The protein localises to the nucleolus. It is found in the nucleoplasm. Component of the large ribosomal subunit. Essential in leaf polarity establishment, probably having a role for translation in leaf dorsoventral patterning to specify leaf adaxial identity. This Arabidopsis thaliana (Mouse-ear cress) protein is Large ribosomal subunit protein eL28z.